A 353-amino-acid chain; its full sequence is MRVVERAVIACYLGITIFSGIAFGYEGAFSSGSFEQNPSGVAIHNRVLFKVDEDTVVTTLDVIRKLNILFYSTCPQLVDSVSARSQYYSAMWPVVLETVINEFLMAADAKAKKIFIDPTSVNQEIEAMFGRDLSPFAKFFDMTPEDVFNVVHRILVAQRVEGMMVRSRVMLKVTPGMVREYYQKLADEAAQITQWTYRVLTIKAGLEFLAHKIAGKVQERLNEGSSWDKERLTALVLSQGGQLMCSEEFFREDAQLSVAHRQSLEEINFPEERCGKVLEHASGLKLFVLFNRATKTLDPLDKMEAQLKQQLMMEFAAEEEANYKNKLHARYGFDPATITKLLAEDAPQLFSLL.

Residues 1 to 24 (MRVVERAVIACYLGITIFSGIAFG) form the signal peptide.

This sequence belongs to the chlamydial CPn_1058/CT_355/TC_0634 family.

This is an uncharacterized protein from Chlamydia trachomatis serovar D (strain ATCC VR-885 / DSM 19411 / UW-3/Cx).